The following is a 573-amino-acid chain: Urease subunit alpha 2 (573 aa).

A Urease domain is found at 135-573 (GGMDTHVHYI…ISLNQLYFFS (439 aa)). Residues His140, His142, and Lys223 each coordinate Ni(2+). Lys223 is modified (N6-carboxylysine). Residue His225 coordinates substrate. Ni(2+) contacts are provided by His252 and His278. The active-site Proton donor is His326. Asp366 lines the Ni(2+) pocket.

It belongs to the metallo-dependent hydrolases superfamily. Urease alpha subunit family. Heterotrimer of UreA (gamma), UreB (beta) and UreC (alpha) subunits. Three heterotrimers associate to form the active enzyme. Ni cation is required as a cofactor. Carboxylation allows a single lysine to coordinate two nickel ions.

It localises to the cytoplasm. It catalyses the reaction urea + 2 H2O + H(+) = hydrogencarbonate + 2 NH4(+). It functions in the pathway nitrogen metabolism; urea degradation; CO(2) and NH(3) from urea (urease route): step 1/1. Disrupting the ure2 operon has no effect on urease activity, or pathogen survival in BALB/c mice when inoculated by gavage, but confers slightly enhanced resistance to low pH killing in vitro. The chain is Urease subunit alpha 2 from Brucella suis biovar 1 (strain 1330).